The sequence spans 694 residues: DNA polymerase eta (694 aa).

The UmuC domain occupies Val9–Gly258. Residues Asp13 and Met14 each coordinate Mg(2+). Mn(2+)-binding residues include Asp13 and Met14. Residue Arg61 coordinates a 2'-deoxyribonucleoside 5'-triphosphate. Positions 115 and 116 each coordinate Mg(2+). Asp115 and Glu116 together coordinate Mn(2+). Glu116 is an active-site residue. The tract at residues Asp565–Pro598 is disordered. The segment at Ala609–Ser643 adopts a UBZ3-type zinc-finger fold. The Zn(2+) site is built by Cys616, Cys619, His631, and His635. Residues Lys651 to His694 form a disordered region. Residues Lys663, Lys667, and Lys675 each participate in a glycyl lysine isopeptide (Lys-Gly) (interchain with G-Cter in ubiquitin) cross-link. Positions Met682 to Phe689 match the PIP-box motif. Lys690 participates in a covalent cross-link: Glycyl lysine isopeptide (Lys-Gly) (interchain with G-Cter in ubiquitin).

It belongs to the DNA polymerase type-Y family. Interacts with REV1. Interacts with monoubiquitinated PCNA, but not unmodified PCNA. Interacts with POLI; this interaction targets POLI to the replication machinery. Interacts with PALB2 and BRCA2; the interactions are direct and are required to sustain the recruitment of POLH at blocked replication forks and to stimulate POLH-dependent DNA synthesis on D loop substrates. Interacts (via C-terminus) with TRAIP. Interacts with ubiquitin. Interacts with POLDIP2. It depends on Mg(2+) as a cofactor. Mn(2+) serves as cofactor. In terms of processing, monoubiquitinated by RCHY1/PIRH2. Ubiquitination depends on integrity of the UBZ3-type zinc finger domain and is enhanced by TRAIP. Ubiquitination inhibits the ability of PolH to interact with PCNA and to bypass UV-induced lesions. Ubiquitous.

The protein localises to the nucleus. The catalysed reaction is DNA(n) + a 2'-deoxyribonucleoside 5'-triphosphate = DNA(n+1) + diphosphate. The enzyme in complex with the DNA substrate binds a third divalent metal cation. The binding of this third divalent cation, which is coordinated by water molecules and two oxygen atoms from DNA and dNTP, is essential for catalyzing the DNA synthesis. Functionally, DNA polymerase specifically involved in the DNA repair by translesion synthesis (TLS). Due to low processivity on both damaged and normal DNA, cooperates with the heterotetrameric (REV3L, REV7, POLD2 and POLD3) POLZ complex for complete bypass of DNA lesions. Inserts one or 2 nucleotide(s) opposite the lesion, the primer is further extended by the tetrameric POLZ complex. In the case of 1,2-intrastrand d(GpG)-cisplatin cross-link, inserts dCTP opposite the 3' guanine. Particularly important for the repair of UV-induced pyrimidine dimers. Although inserts the correct base, may cause base transitions and transversions depending upon the context. May play a role in hypermutation at immunoglobulin genes. Forms a Schiff base with 5'-deoxyribose phosphate at abasic sites, but does not have any lyase activity, preventing the release of the 5'-deoxyribose phosphate (5'-dRP) residue. This covalent trapping of the enzyme by the 5'-dRP residue inhibits its DNA synthetic activity during base excision repair, thereby avoiding high incidence of mutagenesis. Targets POLI to replication foci. This Mus musculus (Mouse) protein is DNA polymerase eta (Polh).